The following is a 319-amino-acid chain: MFPFRRNVLAFAALLALSSPVLAGKLAIVIDDFGYRPHNENQVLAMPSAISVAVLPDSPHAREMATKAHNSGHEVLIHLPMAPLSKQPLEKNTLRPEMSSDEIERIIRSAVNNVPYAVGINNHMGSKMTSNLFGMQKVMQALERYNLYFLDSVTIGNTQAMRAAQGTGVKVIKRKVFLDDSQNEADIRVQFNRAIDLARRNGSTIAIGHPHPATVRVLQQMVYNLPPDITLVKASSLLNEPQVDTSTPPKNAVPDAPRNPFRGVKLCKPKKPIEPVYANRFFEVLSESISQSTLIVYFQHQWQGWGKQPEAAKFNASAN.

A signal peptide spans 1–23 (MFPFRRNVLAFAALLALSSPVLA).

It to H.influenzae HI_0755.

This is an uncharacterized protein from Escherichia coli (strain K12).